A 377-amino-acid polypeptide reads, in one-letter code: Porphobilinogen deaminase (377 aa).

At cysteine 269 the chain carries S-(dipyrrolylmethanemethyl)cysteine.

Belongs to the HMBS family. In terms of assembly, monomer. Requires dipyrromethane as cofactor.

The enzyme catalyses 4 porphobilinogen + H2O = hydroxymethylbilane + 4 NH4(+). Its pathway is porphyrin-containing compound metabolism; protoporphyrin-IX biosynthesis; coproporphyrinogen-III from 5-aminolevulinate: step 2/4. Functionally, tetrapolymerization of the monopyrrole PBG into the hydroxymethylbilane pre-uroporphyrinogen in several discrete steps. The chain is Porphobilinogen deaminase from Micrococcus luteus (strain ATCC 4698 / DSM 20030 / JCM 1464 / CCM 169 / CCUG 5858 / IAM 1056 / NBRC 3333 / NCIMB 9278 / NCTC 2665 / VKM Ac-2230) (Micrococcus lysodeikticus).